Consider the following 147-residue polypeptide: Large ribosomal subunit protein uL15 (147 aa).

The tract at residues 1-58 (MKLHELKPAQGSTKAPKRLGRGIGSGTGKTSGKGHKGQKARAGGGVRPGFEGGQQPLA) is disordered. Gly residues-rich tracts occupy residues 21 to 31 (RGIGSGTGKTS) and 42 to 52 (AGGGVRPGFEG).

The protein belongs to the universal ribosomal protein uL15 family. As to quaternary structure, part of the 50S ribosomal subunit.

Binds to the 23S rRNA. This is Large ribosomal subunit protein uL15 from Desulfitobacterium hafniense (strain Y51).